We begin with the raw amino-acid sequence, 156 residues long: Protein E6 (156 aa).

2 zinc fingers span residues 40–76 and 113–149; these read CNFCGRFLDYLEVCEFDYKKLTLIWKDYSVYACCRLC and CHTCLSFLDIIEKLDSCGRGLPFHKVRNAWKGVCRQC.

The protein belongs to the papillomaviridae E6 protein family. In terms of assembly, forms homodimers. Interacts with ubiquitin-protein ligase UBE3A/E6-AP; this interaction stimulates UBE3A ubiquitin activity. Interacts with host BAK1.

The protein localises to the host cytoplasm. The protein resides in the host nucleus. Functionally, plays a major role in the induction and maintenance of cellular transformation. E6 associates with host UBE3A/E6-AP ubiquitin-protein ligase and modulates its activity. Protects host keratinocytes from apoptosis by mediating the degradation of host BAK1. May also inhibit host immune response. This is Protein E6 from Homo sapiens (Human).